The primary structure comprises 301 residues: ATP synthase gamma chain (301 aa).

This sequence belongs to the ATPase gamma chain family. F-type ATPases have 2 components, CF(1) - the catalytic core - and CF(0) - the membrane proton channel. CF(1) has five subunits: alpha(3), beta(3), gamma(1), delta(1), epsilon(1). CF(0) has three main subunits: a, b and c.

Its subcellular location is the cell inner membrane. Produces ATP from ADP in the presence of a proton gradient across the membrane. The gamma chain is believed to be important in regulating ATPase activity and the flow of protons through the CF(0) complex. This Helicobacter pylori (strain P12) protein is ATP synthase gamma chain.